Consider the following 249-residue polypeptide: tRNA (guanine-N(7)-)-methyltransferase (249 aa).

The tract at residues Met1–Ala24 is disordered. S-adenosyl-L-methionine contacts are provided by Glu81, Glu106, Asp133, and Asp156. Asp156 is a catalytic residue. Residue Lys160 coordinates substrate. The tract at residues Arg162–Arg167 is interaction with RNA. Substrate contacts are provided by residues Asp192 and Thr227–Glu230.

The protein belongs to the class I-like SAM-binding methyltransferase superfamily. TrmB family.

The catalysed reaction is guanosine(46) in tRNA + S-adenosyl-L-methionine = N(7)-methylguanosine(46) in tRNA + S-adenosyl-L-homocysteine. It functions in the pathway tRNA modification; N(7)-methylguanine-tRNA biosynthesis. In terms of biological role, catalyzes the formation of N(7)-methylguanine at position 46 (m7G46) in tRNA. The chain is tRNA (guanine-N(7)-)-methyltransferase from Paracidovorax citrulli (strain AAC00-1) (Acidovorax citrulli).